The primary structure comprises 403 residues: MKLASNTPDWVLAALEERRQQDLMRRTITLDSPQIPHTQIHSQDYTAFCSNDYLGLANHPKLIKALNDTAQAYGVGGGSSHLVCGHLAPHQALEEALADWLGYERVMLFSTGYMANLGVISALADKNRPIVQDKLNHASLIDGALLAQAPLRRYLHGDVASAQKLIARSAAGGLLITDGVFSMDGDIAPLTELSQLANQHDWMFMVDDAHGLGCLGENGRGCLALEGLDATSLPILVGTLGKAFGTAGAFVATSNDYADYLTQFARPYVYTTAMSPAIAGATLASLQLIQSAEGQERRDRLARHITYFRQRVQMLPVALMPSNTAIQPIVIGDSKAAIEISEQLKTLGIWCTAIRPPTVPAGSARLRITLSAAHSDEDLVLLCDSLEKVLTAKLLNAKRLNLK.

Arg25 serves as a coordination point for substrate. A pyridoxal 5'-phosphate-binding site is contributed by 112–113; the sequence is GY. A substrate-binding site is contributed by His137. Residues Ser182, His210, and Thr239 each contribute to the pyridoxal 5'-phosphate site. An N6-(pyridoxal phosphate)lysine modification is found at Lys242. Thr358 contributes to the substrate binding site.

This sequence belongs to the class-II pyridoxal-phosphate-dependent aminotransferase family. BioF subfamily. In terms of assembly, homodimer. It depends on pyridoxal 5'-phosphate as a cofactor.

It catalyses the reaction 6-carboxyhexanoyl-[ACP] + L-alanine + H(+) = (8S)-8-amino-7-oxononanoate + holo-[ACP] + CO2. It functions in the pathway cofactor biosynthesis; biotin biosynthesis. In terms of biological role, catalyzes the decarboxylative condensation of pimeloyl-[acyl-carrier protein] and L-alanine to produce 8-amino-7-oxononanoate (AON), [acyl-carrier protein], and carbon dioxide. The sequence is that of 8-amino-7-oxononanoate synthase from Marinomonas sp. (strain MWYL1).